Here is an 82-residue protein sequence, read N- to C-terminus: uncharacterized protein (82 aa).

The disordered stretch occupies residues 1–20 (MMNLSPPFKSPSGSSRAGRR).

This is an uncharacterized protein from Archaeoglobus fulgidus (strain ATCC 49558 / DSM 4304 / JCM 9628 / NBRC 100126 / VC-16).